An 89-amino-acid polypeptide reads, in one-letter code: Small ribosomal subunit protein uS17 (89 aa).

It belongs to the universal ribosomal protein uS17 family. As to quaternary structure, part of the 30S ribosomal subunit.

One of the primary rRNA binding proteins, it binds specifically to the 5'-end of 16S ribosomal RNA. This is Small ribosomal subunit protein uS17 from Xylella fastidiosa (strain M12).